We begin with the raw amino-acid sequence, 229 residues long: Protein-L-isoaspartate O-methyltransferase (229 aa).

Ser-74 is an active-site residue.

Belongs to the methyltransferase superfamily. L-isoaspartyl/D-aspartyl protein methyltransferase family.

The protein resides in the cytoplasm. The catalysed reaction is [protein]-L-isoaspartate + S-adenosyl-L-methionine = [protein]-L-isoaspartate alpha-methyl ester + S-adenosyl-L-homocysteine. In terms of biological role, catalyzes the methyl esterification of L-isoaspartyl residues in peptides and proteins that result from spontaneous decomposition of normal L-aspartyl and L-asparaginyl residues. It plays a role in the repair and/or degradation of damaged proteins. This is Protein-L-isoaspartate O-methyltransferase from Pelotomaculum thermopropionicum (strain DSM 13744 / JCM 10971 / SI).